Here is a 152-residue protein sequence, read N- to C-terminus: Calmodulin (152 aa).

An N-acetylalanine modification is found at alanine 2. EF-hand domains are found at residues 10-45 (EQIA…LGQN), 46-81 (PTEA…KMQD), 83-118 (DTEE…LGEK), and 119-152 (LTNE…IVRN). The Ca(2+) site is built by aspartate 23, aspartate 25, aspartate 27, serine 29, glutamate 34, aspartate 59, aspartate 61, asparagine 63, asparagine 65, glutamate 70, aspartate 96, aspartate 98, asparagine 100, tyrosine 102, glutamate 107, aspartate 132, aspartate 134, aspartate 136, glutamine 138, and glutamate 143.

The protein belongs to the calmodulin family. As to quaternary structure, interacts with cmbB, numA/nucleomorphin, pgkA/phosphoglycerate kinase, and thyB/thymidine kinase in the presence of Ca(2+). Interacts with dwwA in the absence of Ca(2+). In terms of processing, the N-terminus is blocked. Trimethylation of Lys-118 observed in other calmodulins is absent here.

It is found in the contractile vacuole. Functionally, calmodulin mediates the control of a large number of enzymes, ion channels and other proteins by Ca(2+). Among the enzymes to be stimulated by the calmodulin-Ca(2+) complex are a number of protein kinases and phosphatases. This Dictyostelium discoideum (Social amoeba) protein is Calmodulin (calA).